The primary structure comprises 348 residues: L-threonine 3-dehydrogenase (348 aa).

C42 contributes to the Zn(2+) binding site. Catalysis depends on charge relay system residues T44 and H47. Zn(2+)-binding residues include H67, E68, C97, C100, C103, and C111. Residues L179, E199, R204, 266 to 268 (LGL), and 291 to 292 (IT) contribute to the NAD(+) site.

The protein belongs to the zinc-containing alcohol dehydrogenase family. In terms of assembly, homotetramer. Requires Zn(2+) as cofactor.

The protein localises to the cytoplasm. The enzyme catalyses L-threonine + NAD(+) = (2S)-2-amino-3-oxobutanoate + NADH + H(+). It participates in amino-acid degradation; L-threonine degradation via oxydo-reductase pathway; glycine from L-threonine: step 1/2. Functionally, catalyzes the NAD(+)-dependent oxidation of L-threonine to 2-amino-3-ketobutyrate. This is L-threonine 3-dehydrogenase from Pyrococcus abyssi (strain GE5 / Orsay).